The primary structure comprises 103 residues: Large ribosomal subunit protein bL21 (103 aa).

This sequence belongs to the bacterial ribosomal protein bL21 family. As to quaternary structure, part of the 50S ribosomal subunit. Contacts protein L20.

In terms of biological role, this protein binds to 23S rRNA in the presence of protein L20. This Lactobacillus acidophilus (strain ATCC 700396 / NCK56 / N2 / NCFM) protein is Large ribosomal subunit protein bL21.